Here is a 1580-residue protein sequence, read N- to C-terminus: MEPGSMVRAIFDFCPSVSEELPLFVGDVIEVLAVVDEFWLLGKKEDVTGQFPSSFVEIVTIPSLKEGERLFVCICEFVSRELNSLSLHRGDLVILDDSAPTAGWLQGRSCWGAWGFFPSSCVQELCLSSRSRRWHAQSALLQAPEYSLGQARALMGLSAQLDEELDFREGDLITIIGVPEPGWFEGELEGRRGIFPEGFVELLGPLRTVDESVNSRSGDDSAVNGEVDVPPEEAESGGDEDDQQSGTYGIALYRFQALETNELDFEVGDRIQILGTLEDGWLEGCLKGKTGVFPHRFVKLCPSNRTEETTAQPQESSFPKDSESSVGKSGDSVVEEARQEPWECEEERPDYDLPGQASVPQDHVAPEWTGDTISGQDKDASGSSPDVDLERPLAKDLSTPDPSEEVNGVSSQPQVPIHPKVQKSQHYLTAGGSHQTSDPFSELVPLEARTRDYSSLPPRRTYAQGWSFQKPASHLQRASSLTASRLDRPSHFCHPAMASYAQKHQTSTENTASLHDPPERPERRPGLQDRGPATDITTASQGDSLDLDSKLTQQLIEFEKSLSGPSTEPETIVRRFSIMDFYSEKDIVRGSSNSLPSQAFPERRKTLRPPPPRPRTPTPISSHLLVDQSPKPVPTLVVRPSRPAPLPPPAQQRMNTASPKPTSCAHPGWEAPEKEDSEHMEKSPAQTFPCPSMLARIRDVEQDLDTCTRAQEELNLLLEEKQDDPSRAETLETLRSYESTIQSLTLELQQLRDMTLLSSQSSSLAAPFGSVSTENPEQRMLEKRAKVVAELLQTERDYIRDLEMCIERVMVPLQQAQVPNVDFEGLFGNMQTVIKVSKQLLAALEISDAVGMSSCDCLVPGPVFLDHRDELEGTYRVYCQNHDEAISLLEMYEKDEKTQKHLQDYLADLKGCTNYINLGSFLIKPVQRIMRYPLLLMELLNSTPESHPDKVPLTNAVLAVKEINVNINEYKRRKDLVLKYRKGDEDSLMEKISKLNIHSIIKKSSRVSSHLKHLTGFAPQLKDEVFEETEKNFRMQERLIKSFIRDLSLYLQHIRESACVKVVAAMSIWDLCMERGHHDLEQFEKVHRYISDQLFTRFKERTERLVINPLNQLLNMFTGPYKLVQKRFDKLLDFYNCTERAEKLKDKKTLEELQSARNNYEALNSQLLDELPKFQQYAQSLFTNCIHGYAEAHCDFVQQALEQLQPLLSLLKATDREGNLIAIFLEEHSRVLQQLQVFTFFPESLPAPRKPFERKTTDRQSSRKTLLGMPSYMLQSEELRSSLLARYPPEKLFHVQRNFNAAQDLDVSLLEGDLVGVIKKKDPMGSQNRWLVDNGVTKGFVYSSFLKPYNPRCSHSDASVASHSSTESEHSGSSPGCHRQNSHSALTFNSNNMTVSFTSGLALTQPQDASPLKDCAHETLAVSWNTGHPETGPSTCSSDPGFSCQRRLGNPADGARDISQPASTLRGCQRSSPHSEVVGYSVPGRNDQGSDSIKGSARVCQAPEDRDRGVGSSETEGNQVYFAIYTFKARNPNELSVLANQRLRIHEFKDVTGNTEWWLAEVNGRKGYVPSNYIRKTEYT.

Position 1 is an N-acetylmethionine (M1). SH3 domains are found at residues 2–61 (EPGS…IVTI), 66–127 (EGER…ELCL), and 146–205 (YSLG…LLGP). Disordered stretches follow at residues 211-245 (ESVN…DQQS), 304-446 (NRTE…LVPL), 500-546 (YAQK…DSLD), and 589-688 (RGSS…AQTF). Over residues 229–243 (VPPEEAESGGDEDDQ) the composition is skewed to acidic residues. Residues 244–303 (QSGTYGIALYRFQALETNELDFEVGDRIQILGTLEDGWLEGCLKGKTGVFPHRFVKLCPS) enclose the SH3 4 domain. Polar residues-rich tracts occupy residues 422-439 (QKSQ…TSDP) and 502-513 (QKHQTSTENTAS). Residues 516 to 527 (DPPERPERRPGL) show a composition bias toward basic and acidic residues. The segment covering 608-617 (RPPPPRPRTP) has biased composition (pro residues). Over residues 671-682 (APEKEDSEHMEK) the composition is skewed to basic and acidic residues. S683 is subject to Phosphoserine. Residues 694–755 (LARIRDVEQD…LELQQLRDMT (62 aa)) adopt a coiled-coil conformation. Residues 783-970 (KRAKVVAELL…KEINVNINEY (188 aa)) form the DH domain. In terms of domain architecture, BAR spans 1011-1220 (LKHLTGFAPQ…LKATDREGNL (210 aa)). In terms of domain architecture, SH3 5 spans 1288–1351 (PPEKLFHVQR…YSSFLKPYNP (64 aa)). The segment covering 1356–1365 (SDASVASHSS) has biased composition (low complexity). Disordered regions lie at residues 1356–1384 (SDAS…NSHS) and 1426–1514 (TGHP…GSSE). Positions 1426-1440 (TGHPETGPSTCSSDP) are enriched in polar residues. The SH3 6 domain occupies 1516-1579 (EGNQVYFAIY…PSNYIRKTEY (64 aa)).

In terms of assembly, binds DNM1 via its N-terminal SH3 domains. The C-terminal SH3 domain binds a complex containing actin, tubulin, Hsp70 and actin-regulatory proteins, such as ENAH, EVL, WIRE, CR16, WAVE1 and NAP1L1. Interacts with FASLG. Interacts (via SH3 domain 6) with WASL. Interacts (via SH3 domain 6) interacts with ENAH. Interacts (via C-terminal domain) with TJP1; required for the apical cell-cell junction localization of DNMBP.

It localises to the cytoplasm. The protein localises to the golgi apparatus. Its subcellular location is the golgi stack. It is found in the cytoskeleton. The protein resides in the synapse. It localises to the cell junction. In terms of biological role, plays a critical role as a guanine nucleotide exchange factor (GEF) for CDC42 in several intracellular processes associated with the actin and microtubule cytoskeleton. Regulates the structure of apical junctions in epithelial cells. Participates in the normal lumenogenesis of epithelial cell cysts by regulating spindle orientation. Plays a role in ciliogenesis. May play a role in membrane trafficking between the cell surface and the Golgi. The chain is Dynamin-binding protein from Mus musculus (Mouse).